A 161-amino-acid polypeptide reads, in one-letter code: ATP synthase subunit b 1 (161 aa).

A helical transmembrane segment spans residues 5-25 (EFWVAVAFVIFCGIVWKAGGF).

This sequence belongs to the ATPase B chain family. F-type ATPases have 2 components, F(1) - the catalytic core - and F(0) - the membrane proton channel. F(1) has five subunits: alpha(3), beta(3), gamma(1), delta(1), epsilon(1). F(0) has three main subunits: a(1), b(2) and c(10-14). The alpha and beta chains form an alternating ring which encloses part of the gamma chain. F(1) is attached to F(0) by a central stalk formed by the gamma and epsilon chains, while a peripheral stalk is formed by the delta and b chains.

It is found in the cell inner membrane. In terms of biological role, f(1)F(0) ATP synthase produces ATP from ADP in the presence of a proton or sodium gradient. F-type ATPases consist of two structural domains, F(1) containing the extramembraneous catalytic core and F(0) containing the membrane proton channel, linked together by a central stalk and a peripheral stalk. During catalysis, ATP synthesis in the catalytic domain of F(1) is coupled via a rotary mechanism of the central stalk subunits to proton translocation. Its function is as follows. Component of the F(0) channel, it forms part of the peripheral stalk, linking F(1) to F(0). This Methylobacterium sp. (strain 4-46) protein is ATP synthase subunit b 1.